The following is a 338-amino-acid chain: Phenylalanine--tRNA ligase alpha subunit (338 aa).

Glu259 is a binding site for Mg(2+).

The protein belongs to the class-II aminoacyl-tRNA synthetase family. Phe-tRNA synthetase alpha subunit type 1 subfamily. As to quaternary structure, tetramer of two alpha and two beta subunits. Mg(2+) is required as a cofactor.

It is found in the cytoplasm. It catalyses the reaction tRNA(Phe) + L-phenylalanine + ATP = L-phenylalanyl-tRNA(Phe) + AMP + diphosphate + H(+). This chain is Phenylalanine--tRNA ligase alpha subunit, found in Janthinobacterium sp. (strain Marseille) (Minibacterium massiliensis).